The chain runs to 357 residues: Peptide chain release factor 1 (357 aa).

Gln233 bears the N5-methylglutamine mark.

It belongs to the prokaryotic/mitochondrial release factor family. In terms of processing, methylated by PrmC. Methylation increases the termination efficiency of RF1.

Its subcellular location is the cytoplasm. Functionally, peptide chain release factor 1 directs the termination of translation in response to the peptide chain termination codons UAG and UAA. The polypeptide is Peptide chain release factor 1 (Leuconostoc citreum (strain KM20)).